We begin with the raw amino-acid sequence, 226 residues long: Sugar fermentation stimulation protein homolog (226 aa).

It belongs to the SfsA family.

This is Sugar fermentation stimulation protein homolog from Picrophilus torridus (strain ATCC 700027 / DSM 9790 / JCM 10055 / NBRC 100828 / KAW 2/3).